The sequence spans 356 residues: Tyrosine recombinase XerS (356 aa).

A Core-binding (CB) domain is found at Ile-16–Thr-121. In terms of domain architecture, Tyr recombinase spans Ala-169–Asp-354. Active-site residues include Arg-210, Lys-234, His-306, Arg-309, and His-332. The active-site O-(3'-phospho-DNA)-tyrosine intermediate is Tyr-341.

It belongs to the 'phage' integrase family. XerS subfamily.

Its subcellular location is the cytoplasm. Its activity is regulated as follows. FtsK is required for recombination. Site-specific tyrosine recombinase, which acts by catalyzing the cutting and rejoining of the recombining DNA molecules. Essential to convert dimers of the bacterial chromosome into monomers to permit their segregation at cell division. The sequence is that of Tyrosine recombinase XerS from Streptococcus equi subsp. equi (strain 4047).